The following is a 267-amino-acid chain: Large ribosomal subunit protein bL9m (267 aa).

Residues 1 to 52 (MAALVVTEPGRALLRAGTERLLRGGIQELLRPRHEGNSPGLARDFSLSQNRG) constitute a mitochondrion transit peptide.

The protein belongs to the bacterial ribosomal protein bL9 family. As to quaternary structure, component of the mitochondrial ribosome large subunit (39S) which comprises a 16S rRNA and about 50 distinct proteins.

The protein resides in the mitochondrion. The polypeptide is Large ribosomal subunit protein bL9m (MRPL9) (Papio anubis (Olive baboon)).